We begin with the raw amino-acid sequence, 134 residues long: Ribosome-binding factor A (134 aa).

The protein belongs to the RbfA family. Monomer. Binds 30S ribosomal subunits, but not 50S ribosomal subunits or 70S ribosomes.

The protein localises to the cytoplasm. Its function is as follows. One of several proteins that assist in the late maturation steps of the functional core of the 30S ribosomal subunit. Associates with free 30S ribosomal subunits (but not with 30S subunits that are part of 70S ribosomes or polysomes). Required for efficient processing of 16S rRNA. May interact with the 5'-terminal helix region of 16S rRNA. This chain is Ribosome-binding factor A, found in Psychrobacter arcticus (strain DSM 17307 / VKM B-2377 / 273-4).